The chain runs to 216 residues: MTATRNVKGLLGTKLGMTQVWDENNKLIPVTVVQADSNVITQLRNAEVDGYVAVQIGYGQIDPRKVTKPLAGHFEKAGVTPRRHVVELRTADAASYELGQELSVEIFEAGQKIDVVGTSKGKGFAGVMKRHGFHGVGASHGAHKNHRKPGSIGGASTPSRVFKGLKMAGRMGAERHTTLNLTVHAIDAEKSLLLIKGAVPGARGQVVLVRTAVKGA.

Positions 137-157 (GASHGAHKNHRKPGSIGGAST) are disordered.

The protein belongs to the universal ribosomal protein uL3 family. As to quaternary structure, part of the 50S ribosomal subunit. Forms a cluster with proteins L14 and L19.

In terms of biological role, one of the primary rRNA binding proteins, it binds directly near the 3'-end of the 23S rRNA, where it nucleates assembly of the 50S subunit. This chain is Large ribosomal subunit protein uL3, found in Paenarthrobacter aurescens (strain TC1).